The sequence spans 325 residues: Homoserine O-succinyltransferase (325 aa).

Cys142 serves as the catalytic Acyl-thioester intermediate. Residues Lys163 and Ser191 each coordinate substrate. The active-site Proton acceptor is His234. The active site involves Glu236. Position 248 (Arg248) interacts with substrate.

The protein belongs to the MetA family.

Its subcellular location is the cytoplasm. It carries out the reaction L-homoserine + succinyl-CoA = O-succinyl-L-homoserine + CoA. The protein operates within amino-acid biosynthesis; L-methionine biosynthesis via de novo pathway; O-succinyl-L-homoserine from L-homoserine: step 1/1. Its function is as follows. Transfers a succinyl group from succinyl-CoA to L-homoserine, forming succinyl-L-homoserine. This Bradyrhizobium japonicum protein is Homoserine O-succinyltransferase.